The chain runs to 292 residues: 2-hydroxy-3-oxopropionate reductase (292 aa).

Residues 4-18 (GFIGLGIMGTPMAIN) and S94 contribute to the NAD(+) site. K169 is an active-site residue. An NAD(+)-binding site is contributed by K237.

This sequence belongs to the HIBADH-related family.

It catalyses the reaction (R)-glycerate + NADP(+) = 2-hydroxy-3-oxopropanoate + NADPH + H(+). It carries out the reaction (R)-glycerate + NAD(+) = 2-hydroxy-3-oxopropanoate + NADH + H(+). Its pathway is organic acid metabolism; glycolate degradation; 3-phospho-D-glycerate from glycolate: step 3/4. This chain is 2-hydroxy-3-oxopropionate reductase (glxR), found in Escherichia coli (strain K12).